The sequence spans 75 residues: UPF0352 protein VSAL_I1058 (75 aa).

It belongs to the UPF0352 family.

This Aliivibrio salmonicida (strain LFI1238) (Vibrio salmonicida (strain LFI1238)) protein is UPF0352 protein VSAL_I1058.